Reading from the N-terminus, the 842-residue chain is MVVSVTIRRRFVLLLLACTCLLSRRLCFGEDRITFSSPIKDSESETLLCKSGIFRFGFFTPVNSTTRLRYVGIWYEKIPIQTVVWVANKDSPINDTSGVISIYQDGNLAVTDGRNRLVWSTNVSVPVAPNATWVQLMDSGNLMLQDNRNNGEILWESFKHPYDSFMPRMTLGTDGRTGGNLKLTSWTSHDDPSTGNYTAGIAPFTFPELLIWKNNVPTWRSGPWNGQVFIGLPNMDSLLFLDGFNLNSDNQGTISMSYANDSFMYHFNLDPEGIIYQKDWSTSMRTWRIGVKFPYTDCDAYGRCGRFGSCHAGENPPCKCVKGFVPKNNTEWNGGNWSNGCMRKAPLQCERQRNVSNGGGGGKADGFLKLQKMKVPISAERSEASEQVCPKVCLDNCSCTAYAYDRGIGCMLWSGDLVDMQSFLGSGIDLFIRVAHSELKTHSNLAVMIAAPVIGVMLIAAVCVLLACRKYKKRPAPAKDRSAELMFKRMEALTSDNESASNQIKLKELPLFEFQVLATSTDSFSLRNKLGQGGFGPVYKGKLPEGQEIAVKRLSRKSGQGLEELMNEVVVISKLQHRNLVKLLGCCIEGEERMLVYEYMPKKSLDAYLFDPMKQKILDWKTRFNIMEGICRGLLYLHRDSRLKIIHRDLKASNILLDENLNPKISDFGLARIFRANEDEANTRRVVGTYGYMSPEYAMEGFFSEKSDVFSLGVIFLEIISGRRNSSSHKEENNLNLLAYAWKLWNDGEAASLADPAVFDKCFEKEIEKCVHIGLLCVQEVANDRPNVSNVIWMLTTENMSLADPKQPAFIVRRGASEAESSDQSSQKVSINDVSLTAVTGR.

The N-terminal stretch at 1 to 29 is a signal peptide; it reads MVVSVTIRRRFVLLLLACTCLLSRRLCFG. The Extracellular segment spans residues 30–444; the sequence is EDRITFSSPI…AHSELKTHSN (415 aa). The Bulb-type lectin domain maps to 32 to 157; it reads RITFSSPIKD…RNNGEILWES (126 aa). N-linked (GlcNAc...) asparagine glycosylation is found at N63, N94, N122, N130, N196, and N260. The region spanning 294–330 is the EGF-like; atypical domain; the sequence is PYTDCDAYGRCGRFGSCHAGENPPCKCVKGFVPKNNT. 2 disulfide bridges follow: C298–C310 and C304–C318. 4 N-linked (GlcNAc...) asparagine glycosylation sites follow: N328, N336, N354, and N396. In terms of domain architecture, PAN spans 349-435; sequence CERQRNVSNG…SGIDLFIRVA (87 aa). 2 disulfides stabilise this stretch: C389-C410 and C393-C399. Residues 445–465 form a helical membrane-spanning segment; that stretch reads LAVMIAAPVIGVMLIAAVCVL. The Cytoplasmic segment spans residues 466–842; sequence LACRKYKKRP…DVSLTAVTGR (377 aa). Residues 524 to 810 enclose the Protein kinase domain; it reads FSLRNKLGQG…SLADPKQPAF (287 aa). Residues 530 to 538 and K552 each bind ATP; that span reads LGQGGFGPV. 2 positions are modified to phosphoserine: S558 and S573. The segment at 613–630 is caM-binding; that stretch reads MKQKILDWKTRFNIMEGI. The active-site Proton acceptor is D649. Residues S653 and S666 each carry the phosphoserine modification. Position 683 is a phosphothreonine (T683). Phosphoserine is present on residues S726, S727, S821, and S830. Positions 814 to 842 are disordered; sequence RGASEAESSDQSSQKVSINDVSLTAVTGR. Residues 818-827 show a composition bias toward low complexity; that stretch reads EAESSDQSSQ. Positions 828–842 are enriched in polar residues; sequence KVSINDVSLTAVTGR. T837 bears the Phosphothreonine mark.

It belongs to the protein kinase superfamily. Ser/Thr protein kinase family.

It is found in the cell membrane. The catalysed reaction is L-seryl-[protein] + ATP = O-phospho-L-seryl-[protein] + ADP + H(+). It carries out the reaction L-threonyl-[protein] + ATP = O-phospho-L-threonyl-[protein] + ADP + H(+). This chain is G-type lectin S-receptor-like serine/threonine-protein kinase At1g11330, found in Arabidopsis thaliana (Mouse-ear cress).